The chain runs to 192 residues: MGLEVVVDEIKAKGDREAAAIKAAAEAQAKEIVNEANLRANEIRLAAEKDADTQADRIMIREVASANLVVKRDFLNAQKELLDKVYTSAAEEIANLPADVHAKAVRELLKESAKQIKAGVVFTNARDEKAAKEAISGLKTLSGFTFGGITDIAGGVVVQSTDGQLTLDFSYQTFMGEVWETSLKDASEILFG.

The protein belongs to the V-ATPase E subunit family. As to quaternary structure, has multiple subunits with at least A(3), B(3), C, D, E, F, H, I and proteolipid K(x).

It localises to the cell membrane. Functionally, component of the A-type ATP synthase that produces ATP from ADP in the presence of a proton gradient across the membrane. This chain is A-type ATP synthase subunit E, found in Methanocorpusculum labreanum (strain ATCC 43576 / DSM 4855 / Z).